Reading from the N-terminus, the 1218-residue chain is DNA-directed RNA polymerase subunit beta' (1218 aa).

Zn(2+) is bound by residues Cys60, Cys62, Cys75, and Cys78. Mg(2+) is bound by residues Asp455, Asp457, and Asp459. Positions 824, 897, 904, and 907 each coordinate Zn(2+). The disordered stretch occupies residues 1195 to 1218; sequence ENEAQSDKSQDEQEIGEITVDMGE.

It belongs to the RNA polymerase beta' chain family. As to quaternary structure, the RNAP catalytic core consists of 2 alpha, 1 beta, 1 beta' and 1 omega subunit. When a sigma factor is associated with the core the holoenzyme is formed, which can initiate transcription. Mg(2+) is required as a cofactor. Zn(2+) serves as cofactor.

It carries out the reaction RNA(n) + a ribonucleoside 5'-triphosphate = RNA(n+1) + diphosphate. DNA-dependent RNA polymerase catalyzes the transcription of DNA into RNA using the four ribonucleoside triphosphates as substrates. In Natranaerobius thermophilus (strain ATCC BAA-1301 / DSM 18059 / JW/NM-WN-LF), this protein is DNA-directed RNA polymerase subunit beta'.